Here is a 660-residue protein sequence, read N- to C-terminus: Pentatricopeptide repeat-containing protein At1g03560, mitochondrial (660 aa).

Residues 1–12 (MRRFYRKPFSVP) constitute a mitochondrion transit peptide. 14 PPR repeats span residues 151 to 185 (NLECYVSLVDVLALAKDVDRIRFVSSEIKKFEFPM), 186 to 220 (TVSAANALIKSFGKLGMVEELLWVWRKMKENGIEP), 221 to 255 (TLYTYNFLMNGLVSAMFVDSAERVFEVMESGRIKP), 256 to 290 (DIVTYNTMIKGYCKAGQTQKAMEKLRDMETRGHEA), 291 to 325 (DKITYMTMIQACYADSDFGSCVALYQEMDEKGIQV), 326 to 360 (PPHAFSLVIGGLCKEGKLNEGYTVFENMIRKGSKP), 361 to 395 (NVAIYTVLIDGYAKSGSVEDAIRLLHRMIDEGFKP), 396 to 430 (DVVTYSVVVNGLCKNGRVEEALDYFHTCRFDGLAI), 431 to 465 (NSMFYSSLIDGLGKAGRVDEAERLFEEMSEKGCTR), 466 to 496 (DSYCYNALIDAFTKHRKVDEAIALFKRMEEE), 502 to 536 (TVYTYTILLSGMFKEHRNEEALKLWDMMIDKGITP), 537 to 571 (TAACFRALSTGLCLSGKVARACKILDELAPMGVIL), 574 to 605 (ACEDMINTLCKAGRIKEACKLADGITERGREV), and 606 to 640 (PGRIRTVMINALRKVGKADLAMKLMHSKIGIGYER).

The protein belongs to the PPR family. P subfamily.

It localises to the mitochondrion. The chain is Pentatricopeptide repeat-containing protein At1g03560, mitochondrial from Arabidopsis thaliana (Mouse-ear cress).